A 240-amino-acid polypeptide reads, in one-letter code: RNA-free ribonuclease P (240 aa).

It belongs to the HARP family.

It catalyses the reaction Endonucleolytic cleavage of RNA, removing 5'-extranucleotides from tRNA precursor.. RNA-free RNase P that catalyzes the removal of the 5'-leader sequence from pre-tRNA to produce the mature 5'-terminus. This is RNA-free ribonuclease P from Methanococcus aeolicus (strain ATCC BAA-1280 / DSM 17508 / OCM 812 / Nankai-3).